Here is a 143-residue protein sequence, read N- to C-terminus: Large-conductance mechanosensitive channel (143 aa).

2 helical membrane-spanning segments follow: residues 16 to 36 and 84 to 104; these read VIDLAVGVVIGAAFGKIVTAL and INTVVQFVIIAFAIFLVVKLI.

This sequence belongs to the MscL family. As to quaternary structure, homopentamer.

Its subcellular location is the cell inner membrane. Channel that opens in response to stretch forces in the membrane lipid bilayer. May participate in the regulation of osmotic pressure changes within the cell. This chain is Large-conductance mechanosensitive channel, found in Xanthomonas campestris pv. campestris (strain 8004).